Reading from the N-terminus, the 448-residue chain is MTHVSFNYEKALSFFEKQEITNLEPFVHTAHQMIHERIGAGKDFLGWLDLPRNYNREEYTRIKAAADKIKKDSDILLVIGIGGSYLGAKAALEMLNHSFQNLLSKDQRQVPQIIFVGHHLSSTYMTELFDILKDKDFSINVISKSGTTTEPAIAFRVFKKYLEEKYGQDEAKKRIYATTDRSKGALKTTADSNDYETFVIPDDVGGRYSVLTAVGLLPIAASGINIDDMMEGAKAGMEDLANPVISENPAYQYAAVRNILYQKGKVTELLINYEPNLQYFSEWWKQLFGESEGKNQKGIYPSSANFTTDLHSLGQYIQEGRRNIFETILHVNEPKKDFTLEKEESDLDGLNYLAGKSIHEINDKAFQGTLLAHTDGDVPNLIVEVPRLDAYTFGYLVYFFEKACAISGYILGVNPFDQPGVEAYKKNMFALLGKPGFEDQKEALEKRL.

Glutamate 290 (proton donor) is an active-site residue. Active-site residues include histidine 311 and lysine 425.

The protein belongs to the GPI family.

It is found in the cytoplasm. The enzyme catalyses alpha-D-glucose 6-phosphate = beta-D-fructose 6-phosphate. Its pathway is carbohydrate biosynthesis; gluconeogenesis. It participates in carbohydrate degradation; glycolysis; D-glyceraldehyde 3-phosphate and glycerone phosphate from D-glucose: step 2/4. Catalyzes the reversible isomerization of glucose-6-phosphate to fructose-6-phosphate. This is Glucose-6-phosphate isomerase from Oceanobacillus iheyensis (strain DSM 14371 / CIP 107618 / JCM 11309 / KCTC 3954 / HTE831).